We begin with the raw amino-acid sequence, 339 residues long: Aspartate carbamoyltransferase catalytic subunit (339 aa).

Positions 60 and 61 each coordinate carbamoyl phosphate. L-aspartate is bound at residue Lys-88. Arg-110, His-143, and Gln-146 together coordinate carbamoyl phosphate. L-aspartate-binding residues include Arg-183 and Arg-254. Carbamoyl phosphate contacts are provided by Gly-295 and Pro-296.

Belongs to the aspartate/ornithine carbamoyltransferase superfamily. ATCase family. Heterododecamer (2C3:3R2) of six catalytic PyrB chains organized as two trimers (C3), and six regulatory PyrI chains organized as three dimers (R2).

It catalyses the reaction carbamoyl phosphate + L-aspartate = N-carbamoyl-L-aspartate + phosphate + H(+). Its pathway is pyrimidine metabolism; UMP biosynthesis via de novo pathway; (S)-dihydroorotate from bicarbonate: step 2/3. In terms of biological role, catalyzes the condensation of carbamoyl phosphate and aspartate to form carbamoyl aspartate and inorganic phosphate, the committed step in the de novo pyrimidine nucleotide biosynthesis pathway. This chain is Aspartate carbamoyltransferase catalytic subunit, found in Prochlorococcus marinus (strain MIT 9312).